The chain runs to 738 residues: Propionyl-CoA carboxylase alpha chain, mitochondrial (738 aa).

Residues 62 to 509 form the Biotin carboxylation domain; sequence KFDKILIANR…TTKYLPEVYP (448 aa). Residues lysine 177, 209–270, glutamate 261, and asparagine 296 each bind ATP; that span reads SREI…PRHI. The ATP-grasp domain occupies 181-378; it reads KKIATAARVS…IVQQMLRVAY (198 aa). The Mg(2+) site is built by glutamate 336, glutamate 349, and asparagine 351. Positions 336, 349, and 351 each coordinate Mn(2+). Arginine 353 is an active-site residue. Phenylalanine 409 contacts biotin. The Biotinyl-binding domain occupies 663-738; the sequence is KAKVDLSTVV…DEGEVLVELE (76 aa). Lysine 704 is modified (N6-biotinyllysine).

In terms of assembly, the holoenzyme is a dodecamer composed of 6 alpha subunits and 6 beta subunits. Interacts with sir-2.2. Requires biotin as cofactor. It depends on Mg(2+) as a cofactor. Mn(2+) serves as cofactor. In terms of processing, the biotin cofactor is covalently attached to the C-terminal biotinyl-binding domain and is required for the catalytic activity.

The protein resides in the mitochondrion matrix. It carries out the reaction propanoyl-CoA + hydrogencarbonate + ATP = (S)-methylmalonyl-CoA + ADP + phosphate + H(+). The catalysed reaction is butanoyl-CoA + hydrogencarbonate + ATP = (2S)-ethylmalonyl-CoA + ADP + phosphate + H(+). Its pathway is metabolic intermediate metabolism; propanoyl-CoA degradation; succinyl-CoA from propanoyl-CoA: step 1/3. This is one of the 2 subunits of the biotin-dependent propionyl-CoA carboxylase (PCC), a mitochondrial enzyme involved in the catabolism of odd chain fatty acids, branched-chain amino acids isoleucine, threonine, methionine, and valine and other metabolites. Propionyl-CoA carboxylase catalyzes the carboxylation of propionyl-CoA/propanoyl-CoA to D-methylmalonyl-CoA/(S)-methylmalonyl-CoA. Within the holoenzyme, the alpha subunit catalyzes the ATP-dependent carboxylation of the biotin carried by the biotin carboxyl carrier (BCC) domain, while the beta subunit then transfers the carboxyl group from carboxylated biotin to propionyl-CoA. Propionyl-CoA carboxylase also significantly acts on butyryl-CoA/butanoyl-CoA, which is converted to ethylmalonyl-CoA/(2S)-ethylmalonyl-CoA. Other alternative minor substrates include (2E)-butenoyl-CoA/crotonoyl-CoA. In Caenorhabditis briggsae, this protein is Propionyl-CoA carboxylase alpha chain, mitochondrial (pcca-1).